The primary structure comprises 447 residues: NADH-ubiquinone oxidoreductase chain 4 (447 aa).

13 consecutive transmembrane segments (helical) span residues 4–24 (LLLLIMLNMLMMSMIYLFMLF), 34–54 (LIIGNLIIINLLLNLFNLNWI), 67–87 (MYSYGLIMLTLWIFGLIFISL), 100–120 (LLMISLLLVFLSMNLLLFYLF), 149–169 (MFYTMIFSLPMLYIIYYIYLI), 189–209 (LFIYLLMSFLVKIPIYLFHGW), 223–243 (MILASIMLKLGGYGMLRLMII), 248–268 (FILIQKILVMINSFGVLILSL), 279–299 (IIAISSIVHMGLMIMSMMTFL), 304–324 (IGGYLMMISHGLSSSGLFFLV), 349–371 (MSLLWFMLCSSNMGSPVSLNLIS), 388–408 (LILMMYCLFSFIYSIYLFMFI), and 422–442 (GILVEYFVLLLHWIPLNLMFL).

It belongs to the complex I subunit 4 family.

The protein localises to the mitochondrion membrane. It catalyses the reaction a ubiquinone + NADH + 5 H(+)(in) = a ubiquinol + NAD(+) + 4 H(+)(out). Functionally, core subunit of the mitochondrial membrane respiratory chain NADH dehydrogenase (Complex I) that is believed to belong to the minimal assembly required for catalysis. Complex I functions in the transfer of electrons from NADH to the respiratory chain. The immediate electron acceptor for the enzyme is believed to be ubiquinone. This is NADH-ubiquinone oxidoreductase chain 4 (ND4) from Apis mellifera ligustica (Common honeybee).